Reading from the N-terminus, the 78-residue chain is Acyl carrier protein (78 aa).

The region spanning 2 to 77 is the Carrier domain; it reads SDVLERVSKI…DAVKFISEKV (76 aa). Serine 37 carries the O-(pantetheine 4'-phosphoryl)serine modification.

The protein belongs to the acyl carrier protein (ACP) family. In terms of processing, 4'-phosphopantetheine is transferred from CoA to a specific serine of apo-ACP by AcpS. This modification is essential for activity because fatty acids are bound in thioester linkage to the sulfhydryl of the prosthetic group.

The protein localises to the cytoplasm. It participates in lipid metabolism; fatty acid biosynthesis. Functionally, carrier of the growing fatty acid chain in fatty acid biosynthesis. The protein is Acyl carrier protein of Maricaulis maris (strain MCS10) (Caulobacter maris).